The chain runs to 392 residues: Cytochrome b (392 aa).

The next 4 membrane-spanning stretches (helical) occupy residues 38 to 58 (FGSLAGICLVIQIVTGVFLAM), 82 to 104 (WLLRYMHANGASMFLIVVHLHIF), 119 to 139 (VRCLGVVIFLLMIVTAFTGYV), and 185 to 205 (FFSLHHLLPFILVGASLLHLA). 2 residues coordinate heme b: H88 and H102. 2 residues coordinate heme b: H189 and H203. H208 serves as a coordination point for a ubiquinone. Helical transmembrane passes span 231–251 (FYVKDLVGWVAFAIFFSIWIF), 295–315 (SGGVAAIAPVFICLLALPFFK), 327–347 (IHQGIFWLLLADRLLLGWIGC), and 354–373 (FVTIGQIPPFVFFLFFAITP).

It belongs to the cytochrome b family. In terms of assembly, the main subunits of complex b-c1 are: cytochrome b, cytochrome c1 and the Rieske protein. It depends on heme b as a cofactor.

It localises to the mitochondrion inner membrane. Its function is as follows. Component of the ubiquinol-cytochrome c reductase complex (complex III or cytochrome b-c1 complex) that is part of the mitochondrial respiratory chain. The b-c1 complex mediates electron transfer from ubiquinol to cytochrome c. Contributes to the generation of a proton gradient across the mitochondrial membrane that is then used for ATP synthesis. The chain is Cytochrome b (MT-CYB) from Vicia faba (Broad bean).